The primary structure comprises 244 residues: tRNA (guanine-N(1)-)-methyltransferase (244 aa).

S-adenosyl-L-methionine is bound by residues Gly-113 and 133–138 (IGDFVL).

It belongs to the RNA methyltransferase TrmD family. As to quaternary structure, homodimer.

It is found in the cytoplasm. It catalyses the reaction guanosine(37) in tRNA + S-adenosyl-L-methionine = N(1)-methylguanosine(37) in tRNA + S-adenosyl-L-homocysteine + H(+). Specifically methylates guanosine-37 in various tRNAs. The chain is tRNA (guanine-N(1)-)-methyltransferase from Bacillus pumilus (strain SAFR-032).